Reading from the N-terminus, the 81-residue chain is Cytotoxin 1a (81 aa).

The signal sequence occupies residues 1 to 21; sequence MKTLLLTLVVVTIVCLDLGYT. 4 cysteine pairs are disulfide-bonded: Cys-24/Cys-42, Cys-35/Cys-59, Cys-63/Cys-74, and Cys-75/Cys-80.

Belongs to the three-finger toxin family. Short-chain subfamily. Type IA cytotoxin sub-subfamily. Monomer in solution; Homodimer and oligomer in the presence of negatively charged lipids forming a pore with a size ranging between 20 and 30 Angstroms. In terms of tissue distribution, expressed by the venom gland.

The protein resides in the secreted. It is found in the target cell membrane. Functionally, shows cytolytic activity on many different cells by forming pore in lipid membranes. In vivo, increases heart rate or kills the animal by cardiac arrest. In addition, it binds to heparin with high affinity, interacts with Kv channel-interacting protein 1 (KCNIP1) in a calcium-independent manner, and binds to integrin alpha-V/beta-3 (ITGAV/ITGB3) with moderate affinity. The chain is Cytotoxin 1a from Naja atra (Chinese cobra).